A 285-amino-acid polypeptide reads, in one-letter code: uncharacterized protein (285 aa).

6 consecutive transmembrane segments (helical) span residues 7 to 29, 49 to 71, 95 to 117, 137 to 156, 232 to 254, and 259 to 281; these read FYRLVKNTLLTAFILSLILLTLQ, LVVWNAYYTYFFIPEGVILSTFF, IFLYCSIPFLTFFLISALLSNTL, FFSEVPAGTFVSFGAVVLHA, KVVNYVNVATLPLFFFLSFTVAL, and GGLSYYAFASLFIVVHQLIIFVV.

The protein localises to the cell membrane. This is an uncharacterized protein from Aquifex aeolicus (strain VF5).